Here is a 417-residue protein sequence, read N- to C-terminus: Gap junction alpha-3 protein (417 aa).

The stretch at 2-15 (GDWSFLGRLLENAQ) is an intramembrane region. The Cytoplasmic portion of the chain corresponds to 16-19 (EHST). Residues 20–40 (VIGKVWLTVLFIFRILVLGAA) traverse the membrane as a helical segment. At 41–71 (AEEVWGDEQSDFTCNTQQPGCENVCYDRAFP) the chain is on the extracellular side. 3 disulfides stabilise this stretch: Cys-54–Cys-198, Cys-61–Cys-192, and Cys-65–Cys-187. Residues 72–92 (ISHIRFWALQIIFVSTPTLIY) traverse the membrane as a helical segment. Residues 93–158 (LGHVLHIVRM…GALLRTYVFN (66 aa)) lie on the Cytoplasmic side of the membrane. A compositionally biased stretch (basic and acidic residues) spans 110-128 (EEELLRRDNPQHGRGREPM). Residues 110-141 (EEELLRRDNPQHGRGREPMRTGSPRDPPLRDD) are disordered. Residues 159–179 (IIFKTLFEVGFIAGQYFLYGF) form a helical membrane-spanning segment. The Extracellular segment spans residues 180–207 (QLQPLYRCDRWPCPNTVDCFISRPTEKT). A helical transmembrane segment spans residues 208–228 (IFVIFMLAVACASLVLNMLEI). The Cytoplasmic segment spans residues 229–417 (YHLGWKKLKQ…GRARPGDLAI (189 aa)). 2 disordered regions span residues 247–267 (DASE…SSGP) and 334–417 (RQVA…DLAI). Low complexity predominate over residues 342–353 (PASKPSSAASSP).

It belongs to the connexin family. Alpha-type (group II) subfamily. In terms of assembly, a hemichannel or connexon is composed of a hexamer of connexins. A functional gap junction is formed by the apposition of two hemichannels. Forms heteromeric channels with GJA8.

The protein localises to the cell membrane. The protein resides in the cell junction. It is found in the gap junction. Its function is as follows. Structural component of lens fiber gap junctions. Gap junctions are dodecameric channels that connect the cytoplasm of adjoining cells. They are formed by the docking of two hexameric hemichannels, one from each cell membrane. Small molecules and ions diffuse from one cell to a neighboring cell via the central pore. In Mus musculus (Mouse), this protein is Gap junction alpha-3 protein (Gja3).